Consider the following 132-residue polypeptide: D-ribose pyranase (132 aa).

Residue histidine 20 is the Proton donor of the active site. Substrate contacts are provided by residues aspartate 28, histidine 99, and 121–123 (YSN).

The protein belongs to the RbsD / FucU family. RbsD subfamily. Homodecamer.

It is found in the cytoplasm. The catalysed reaction is beta-D-ribopyranose = beta-D-ribofuranose. It participates in carbohydrate metabolism; D-ribose degradation; D-ribose 5-phosphate from beta-D-ribopyranose: step 1/2. In terms of biological role, catalyzes the interconversion of beta-pyran and beta-furan forms of D-ribose. The sequence is that of D-ribose pyranase from Pseudomonas putida (strain GB-1).